Here is a 218-residue protein sequence, read N- to C-terminus: Putative glutamine transport system permease protein GlnP (218 aa).

The 190-residue stretch at 19–208 (TLVTLKYSVI…ILVMLISFIA (190 aa)) folds into the ABC transmembrane type-1 domain. 4 consecutive transmembrane segments (helical) span residues 25–45 (YSVI…ICKV), 57–79 (FYTS…FASP), 86–108 (FSVF…SEVI), and 187–207 (FFPM…ISFI).

It belongs to the binding-protein-dependent transport system permease family. HisMQ subfamily.

Its subcellular location is the cell inner membrane. Functionally, part of the binding-protein-dependent transport system for glutamine; probably responsible for the translocation of the substrate across the membrane. The sequence is that of Putative glutamine transport system permease protein GlnP (glnP) from Rickettsia felis (strain ATCC VR-1525 / URRWXCal2) (Rickettsia azadi).